Consider the following 167-residue polypeptide: Mitochondrial inner membrane protease subunit 1 (167 aa).

Catalysis depends on residues serine 40 and lysine 83.

This sequence belongs to the peptidase S26 family. IMP1 subfamily. As to quaternary structure, heterodimer of 2 subunits, IMMPL1 and IMMPL2.

It localises to the mitochondrion inner membrane. Catalyzes the removal of transit peptides required for the targeting of proteins from the mitochondrial matrix, across the inner membrane, into the inter-membrane space. This chain is Mitochondrial inner membrane protease subunit 1 (immp1l), found in Xenopus tropicalis (Western clawed frog).